We begin with the raw amino-acid sequence, 129 residues long: Fluoride-specific ion channel FluC 2 (129 aa).

4 consecutive transmembrane segments (helical) span residues 4–24 (LDVM…WWIG), 39–59 (TFLI…LFGV), 65–85 (YGTM…TTFS), and 100–120 (GGLA…AAWL). Residues glycine 79 and threonine 82 each coordinate Na(+).

The protein belongs to the fluoride channel Fluc/FEX (TC 1.A.43) family.

It is found in the cell inner membrane. The enzyme catalyses fluoride(in) = fluoride(out). With respect to regulation, na(+) is not transported, but it plays an essential structural role and its presence is essential for fluoride channel function. Fluoride-specific ion channel. Important for reducing fluoride concentration in the cell, thus reducing its toxicity. This chain is Fluoride-specific ion channel FluC 2, found in Brucella suis biovar 1 (strain 1330).